A 347-amino-acid chain; its full sequence is GMP reductase (347 aa).

108 to 131 (ADFEKTVQILALNPALNFVCIDVA) contributes to the NADP(+) binding site. Positions 181 and 183 each coordinate K(+). The Thioimidate intermediate role is filled by Cys-186. Residue 216–239 (IVSDGGCTMPGDVAKAFGGGADFV) participates in NADP(+) binding.

This sequence belongs to the IMPDH/GMPR family. GuaC type 1 subfamily. In terms of assembly, homotetramer.

It carries out the reaction IMP + NH4(+) + NADP(+) = GMP + NADPH + 2 H(+). Its function is as follows. Catalyzes the irreversible NADPH-dependent deamination of GMP to IMP. It functions in the conversion of nucleobase, nucleoside and nucleotide derivatives of G to A nucleotides, and in maintaining the intracellular balance of A and G nucleotides. This Salmonella paratyphi C (strain RKS4594) protein is GMP reductase.